The primary structure comprises 525 residues: GMP synthase [glutamine-hydrolyzing] (525 aa).

The Glutamine amidotransferase type-1 domain maps to 9–207 (RILILDFGSQ…VRDICQCEAL (199 aa)). The active-site Nucleophile is C86. Catalysis depends on residues H181 and E183. One can recognise a GMPS ATP-PPase domain in the interval 208-400 (WTPAKIIDDA…LGLPYDMLYR (193 aa)). 235–241 (SGGVDSS) serves as a coordination point for ATP.

In terms of assembly, homodimer.

The enzyme catalyses XMP + L-glutamine + ATP + H2O = GMP + L-glutamate + AMP + diphosphate + 2 H(+). The protein operates within purine metabolism; GMP biosynthesis; GMP from XMP (L-Gln route): step 1/1. Functionally, catalyzes the synthesis of GMP from XMP. The protein is GMP synthase [glutamine-hydrolyzing] of Escherichia coli (strain K12 / MC4100 / BW2952).